A 706-amino-acid polypeptide reads, in one-letter code: Elongation factor G (706 aa).

In terms of domain architecture, tr-type G spans 15-291; it reads LKTRNIGISA…GVLDYLASPV (277 aa). Residues 24–31, 91–95, and 145–148 each bind GTP; these read AHIDSGKT, DTPGH, and NKLD.

It belongs to the TRAFAC class translation factor GTPase superfamily. Classic translation factor GTPase family. EF-G/EF-2 subfamily.

It is found in the cytoplasm. Its function is as follows. Catalyzes the GTP-dependent ribosomal translocation step during translation elongation. During this step, the ribosome changes from the pre-translocational (PRE) to the post-translocational (POST) state as the newly formed A-site-bound peptidyl-tRNA and P-site-bound deacylated tRNA move to the P and E sites, respectively. Catalyzes the coordinated movement of the two tRNA molecules, the mRNA and conformational changes in the ribosome. The polypeptide is Elongation factor G (Leptospira borgpetersenii serovar Hardjo-bovis (strain JB197)).